Consider the following 78-residue polypeptide: Large ribosomal subunit protein bL28 (78 aa).

The segment at 1–21 (MSRVCQVTGKRPVSGNNRSHA) is disordered.

The protein belongs to the bacterial ribosomal protein bL28 family.

The polypeptide is Large ribosomal subunit protein bL28 (Serratia proteamaculans (strain 568)).